We begin with the raw amino-acid sequence, 420 residues long: Tryptophan synthase beta chain (420 aa).

Lys112 carries the post-translational modification N6-(pyridoxal phosphate)lysine.

This sequence belongs to the TrpB family. In terms of assembly, tetramer of two alpha and two beta chains. Pyridoxal 5'-phosphate is required as a cofactor.

It carries out the reaction (1S,2R)-1-C-(indol-3-yl)glycerol 3-phosphate + L-serine = D-glyceraldehyde 3-phosphate + L-tryptophan + H2O. Its pathway is amino-acid biosynthesis; L-tryptophan biosynthesis; L-tryptophan from chorismate: step 5/5. In terms of biological role, the beta subunit is responsible for the synthesis of L-tryptophan from indole and L-serine. In Thermosipho africanus (strain TCF52B), this protein is Tryptophan synthase beta chain.